The primary structure comprises 497 residues: Glycerol kinase (497 aa).

T12 lines the ADP pocket. ATP is bound by residues T12, T13, and S14. Sn-glycerol 3-phosphate is bound at residue T12. R16 contacts ADP. Residues R82, E83, Y134, and D243 each coordinate sn-glycerol 3-phosphate. Residues R82, E83, Y134, D243, and Q244 each contribute to the glycerol site. T265 and G308 together coordinate ADP. ATP contacts are provided by T265, G308, Q312, and G409. G409 and N413 together coordinate ADP.

This sequence belongs to the FGGY kinase family. In terms of assembly, homotetramer and homodimer (in equilibrium).

It catalyses the reaction glycerol + ATP = sn-glycerol 3-phosphate + ADP + H(+). It functions in the pathway polyol metabolism; glycerol degradation via glycerol kinase pathway; sn-glycerol 3-phosphate from glycerol: step 1/1. With respect to regulation, activated by phosphorylation and inhibited by fructose 1,6-bisphosphate (FBP). Functionally, key enzyme in the regulation of glycerol uptake and metabolism. Catalyzes the phosphorylation of glycerol to yield sn-glycerol 3-phosphate. This is Glycerol kinase from Caldanaerobacter subterraneus subsp. tengcongensis (strain DSM 15242 / JCM 11007 / NBRC 100824 / MB4) (Thermoanaerobacter tengcongensis).